Consider the following 320-residue polypeptide: Alpha/beta hydrolase domain-containing protein 17C (320 aa).

The interval 50-75 (RAPAPAATPAPAPAAQPAPAEEGAGP) is disordered. Pro residues predominate over residues 55–65 (AATPAPAPAAQ). Active-site charge relay system residues include S202, D267, and H296.

Belongs to the AB hydrolase superfamily. ABHD17 family. In terms of processing, palmitoylated on cysteine residues located in a cysteine cluster at the N-terminus which promotes membrane localization. Palmitoylation is required for post-synaptic localization and for depalmitoylating activity towards DLG4/PSD95.

Its subcellular location is the recycling endosome membrane. It is found in the cell projection. The protein resides in the dendritic spine. It localises to the postsynaptic density membrane. It carries out the reaction S-hexadecanoyl-L-cysteinyl-[protein] + H2O = L-cysteinyl-[protein] + hexadecanoate + H(+). In terms of biological role, hydrolyzes fatty acids from S-acylated cysteine residues in proteins. Has depalmitoylating activity towards DLG4/PSD95. This is Alpha/beta hydrolase domain-containing protein 17C from Mus musculus (Mouse).